Reading from the N-terminus, the 334-residue chain is MLVLGIESSCDDTAAAVWDDGTVRSNVVSSQADLHEEYGGVVPELASRNHQRLIVPVVQRALAEADADARALDAIAGTYGPGLPGSLLVGLSFAKALAQGLDVPLIGVNHLEGHVYSVDLGPERPARPFLCLIVSGGHTELVHVGDDFQHDVLGRTRDDAAGEAFDKMAQLFGLGYPGGPDIDRHAESGAPTFHDFPRSRLDDFDFSFSGLKTSVLYYLRDRSDADRERLLDEHLDDLCASVRAAVVDVLVDAVRRAVEATGVGHVAVVGGVAANSALRRRMKALGDDEGVDVSVPDLAYCMDNAAMIAQAGARRLAAGHASPPTLDVHPSLQL.

Positions 110 and 114 each coordinate Fe cation. Substrate-binding positions include 133 to 137, Asp166, Gly179, Asp183, and Asn275; that span reads IVSGG. Asp303 provides a ligand contact to Fe cation.

It belongs to the KAE1 / TsaD family. Fe(2+) serves as cofactor.

Its subcellular location is the cytoplasm. It carries out the reaction L-threonylcarbamoyladenylate + adenosine(37) in tRNA = N(6)-L-threonylcarbamoyladenosine(37) in tRNA + AMP + H(+). Functionally, required for the formation of a threonylcarbamoyl group on adenosine at position 37 (t(6)A37) in tRNAs that read codons beginning with adenine. Is involved in the transfer of the threonylcarbamoyl moiety of threonylcarbamoyl-AMP (TC-AMP) to the N6 group of A37, together with TsaE and TsaB. TsaD likely plays a direct catalytic role in this reaction. This chain is tRNA N6-adenosine threonylcarbamoyltransferase, found in Salinibacter ruber (strain DSM 13855 / M31).